Here is a 689-residue protein sequence, read N- to C-terminus: DNA topoisomerase 1 (689 aa).

The Toprim domain maps to 3-113 (DNLVIVESPA…KENRVVFNEI (111 aa)). Mg(2+) contacts are provided by Glu9 and Asp82. The Topo IA-type catalytic domain maps to 129–557 (EMNLVDAQQA…FFSSFKQDVE (429 aa)). The interval 163–168 (SAGRVQ) is interaction with DNA. Residue Tyr298 is the O-(5'-phospho-DNA)-tyrosine intermediate of the active site. A disordered region spans residues 328–357 (SKRKASGKQGDQDAHEAIRPSSTMRTPDDM). C4-type zinc fingers lie at residues 577 to 603 (CEVCGSPMVIKMGRYGKFMACSNFPDC), 617 to 645 (CPKCNDGDVVERKSKKNRVFYGCSKYPEC), and 658 to 681 (CPKCNQYLVENKKGKTTQVICSNC).

The protein belongs to the type IA topoisomerase family. In terms of assembly, monomer. Mg(2+) serves as cofactor.

It catalyses the reaction ATP-independent breakage of single-stranded DNA, followed by passage and rejoining.. Its function is as follows. Releases the supercoiling and torsional tension of DNA, which is introduced during the DNA replication and transcription, by transiently cleaving and rejoining one strand of the DNA duplex. Introduces a single-strand break via transesterification at a target site in duplex DNA. The scissile phosphodiester is attacked by the catalytic tyrosine of the enzyme, resulting in the formation of a DNA-(5'-phosphotyrosyl)-enzyme intermediate and the expulsion of a 3'-OH DNA strand. The free DNA strand then undergoes passage around the unbroken strand, thus removing DNA supercoils. Finally, in the religation step, the DNA 3'-OH attacks the covalent intermediate to expel the active-site tyrosine and restore the DNA phosphodiester backbone. The protein is DNA topoisomerase 1 of Staphylococcus aureus (strain bovine RF122 / ET3-1).